The primary structure comprises 453 residues: Aspartic proteinase PCS1 (453 aa).

The first 18 residues, 1 to 18 (MFSRFHALFLLLVLSVRT), serve as a signal peptide directing secretion. The propeptide at 19–57 (YKCVSSSSSSSSSFSFSSFSSSSSSQTLVLPLKTRITPT) is activation peptide. N-linked (GlcNAc...) asparagine glycosylation is found at Asn-70 and Asn-85. A Peptidase A1 domain is found at 73-438 (LTVTLTVGTP…DLQRSRIGLA (366 aa)). Asp-91 is a catalytic residue. N-linked (GlcNAc...) asparagine glycosylation is found at Asn-102, Asn-175, Asn-178, and Asn-243. Asp-304 is an active-site residue. N-linked (GlcNAc...) asparagine glycosylation is found at Asn-326 and Asn-395.

This sequence belongs to the peptidase A1 family. In terms of tissue distribution, expressed specifically in developing gametophytes and developing seeds.

Its subcellular location is the endoplasmic reticulum. In terms of biological role, embryo-specific aspartic protease that limits programmed cell death during reproductive development. Possesses peptidase activity toward casein in vitro. This is Aspartic proteinase PCS1 (PCS1) from Arabidopsis thaliana (Mouse-ear cress).